The sequence spans 309 residues: Minor serine/threonine-protein phosphatase PP2A-1 catalytic subunit (309 aa).

Residues Asp-57, His-59, Asp-85, and Asn-117 each contribute to the Mn(2+) site. Catalysis depends on His-118, which acts as the Proton donor. Residues His-167 and His-241 each contribute to the Mn(2+) site. A Leucine methyl ester modification is found at Leu-309.

It belongs to the PPP phosphatase family. PP-2A subfamily. It depends on Mn(2+) as a cofactor.

The enzyme catalyses O-phospho-L-seryl-[protein] + H2O = L-seryl-[protein] + phosphate. It catalyses the reaction O-phospho-L-threonyl-[protein] + H2O = L-threonyl-[protein] + phosphate. Its function is as follows. Essential role in cell cycle control. PP2A may be involved in controlling the entry into mitosis, possibly acting as an inhibitor. The sequence is that of Minor serine/threonine-protein phosphatase PP2A-1 catalytic subunit (ppa1) from Schizosaccharomyces pombe (strain 972 / ATCC 24843) (Fission yeast).